Here is a 193-residue protein sequence, read N- to C-terminus: Crossover junction endodeoxyribonuclease RuvC (193 aa).

Catalysis depends on residues Asp-7, Glu-68, and Asp-141. 3 residues coordinate Mg(2+): Asp-7, Glu-68, and Asp-141.

Belongs to the RuvC family. In terms of assembly, homodimer which binds Holliday junction (HJ) DNA. The HJ becomes 2-fold symmetrical on binding to RuvC with unstacked arms; it has a different conformation from HJ DNA in complex with RuvA. In the full resolvosome a probable DNA-RuvA(4)-RuvB(12)-RuvC(2) complex forms which resolves the HJ. Mg(2+) serves as cofactor.

The protein resides in the cytoplasm. The catalysed reaction is Endonucleolytic cleavage at a junction such as a reciprocal single-stranded crossover between two homologous DNA duplexes (Holliday junction).. The RuvA-RuvB-RuvC complex processes Holliday junction (HJ) DNA during genetic recombination and DNA repair. Endonuclease that resolves HJ intermediates. Cleaves cruciform DNA by making single-stranded nicks across the HJ at symmetrical positions within the homologous arms, yielding a 5'-phosphate and a 3'-hydroxyl group; requires a central core of homology in the junction. The consensus cleavage sequence is 5'-(A/T)TT(C/G)-3'. Cleavage occurs on the 3'-side of the TT dinucleotide at the point of strand exchange. HJ branch migration catalyzed by RuvA-RuvB allows RuvC to scan DNA until it finds its consensus sequence, where it cleaves and resolves the cruciform DNA. This is Crossover junction endodeoxyribonuclease RuvC from Renibacterium salmoninarum (strain ATCC 33209 / DSM 20767 / JCM 11484 / NBRC 15589 / NCIMB 2235).